A 60-amino-acid chain; its full sequence is MRCVPVFVILLLLIASAASIDAQQKTKDDAPLTSLNDNALQQHWNKRCCPRKIWCCMIPR.

The N-terminal stretch at 1–19 (MRCVPVFVILLLLIASAAS) is a signal peptide. A propeptide spanning residues 20–47 (IDAQQKTKDDAPLTSLNDNALQQHWNKR) is cleaved from the precursor.

Belongs to the conotoxin T superfamily. Contains 2 disulfide bonds that can be either 'C1-C3, C2-C4' or 'C1-C4, C2-C3', since these disulfide connectivities have been observed for conotoxins with cysteine framework V (for examples, see AC P0DQQ7 and AC P81755). As to expression, expressed by the venom duct.

The protein resides in the secreted. In Conus pulicarius (Flea-bitten cone), this protein is Conotoxin Pu5.6.